The chain runs to 132 residues: Putative F-box protein At4g05620 (132 aa).

Residues 17-63 (QKKSLSLPHDVLVSCLAHVSRLHYSILSLVLKNFRSLIASPELYKTR) form the F-box domain.

This chain is Putative F-box protein At4g05620, found in Arabidopsis thaliana (Mouse-ear cress).